An 87-amino-acid chain; its full sequence is Small ribosomal subunit protein bS16 (87 aa).

The protein belongs to the bacterial ribosomal protein bS16 family.

This Ehrlichia ruminantium (strain Gardel) protein is Small ribosomal subunit protein bS16.